The sequence spans 287 residues: Spermidine/putrescine transport system permease protein PotB (287 aa).

The Cytoplasmic segment spans residues Met1–Val10. A helical membrane pass occupies residues Val11–Ile31. The Periplasmic portion of the chain corresponds to Gly32–Asn70. The ABC transmembrane type-1 domain maps to Leu65 to Tyr271. Residues Met71–Ala91 form a helical membrane-spanning segment. Residues Lys92–Pro99 are Cytoplasmic-facing. A helical membrane pass occupies residues Leu100 to Leu120. Over Lys121–Arg145 the chain is Periplasmic. A helical transmembrane segment spans residues Ile146–Val166. Over Met167–Arg197 the chain is Cytoplasmic. Residues Ile198–Ala218 traverse the membrane as a helical segment. Topologically, residues Met219 to Pro251 are periplasmic. Residues Phe252 to Trp272 form a helical membrane-spanning segment. At Arg273–Asp287 the chain is on the cytoplasmic side.

It belongs to the binding-protein-dependent transport system permease family. CysTW subfamily.

The protein resides in the cell inner membrane. Its function is as follows. Required for the activity of the bacterial periplasmic transport system of putrescine and spermidine. The chain is Spermidine/putrescine transport system permease protein PotB (potB) from Salmonella typhi.